Consider the following 229-residue polypeptide: Putative N-acetylmannosamine-6-phosphate 2-epimerase (229 aa).

This sequence belongs to the NanE family.

The catalysed reaction is an N-acyl-D-glucosamine 6-phosphate = an N-acyl-D-mannosamine 6-phosphate. It functions in the pathway amino-sugar metabolism; N-acetylneuraminate degradation; D-fructose 6-phosphate from N-acetylneuraminate: step 3/5. Functionally, converts N-acetylmannosamine-6-phosphate (ManNAc-6-P) to N-acetylglucosamine-6-phosphate (GlcNAc-6-P). This chain is Putative N-acetylmannosamine-6-phosphate 2-epimerase, found in Escherichia coli O8 (strain IAI1).